Consider the following 496-residue polypeptide: Glutamyl-tRNA(Gln) amidotransferase subunit A (496 aa).

Residues Lys-75 and Ser-150 each act as charge relay system in the active site. Catalysis depends on Ser-174, which acts as the Acyl-ester intermediate.

The protein belongs to the amidase family. GatA subfamily. Heterotrimer of A, B and C subunits.

It catalyses the reaction L-glutamyl-tRNA(Gln) + L-glutamine + ATP + H2O = L-glutaminyl-tRNA(Gln) + L-glutamate + ADP + phosphate + H(+). Functionally, allows the formation of correctly charged Gln-tRNA(Gln) through the transamidation of misacylated Glu-tRNA(Gln) in organisms which lack glutaminyl-tRNA synthetase. The reaction takes place in the presence of glutamine and ATP through an activated gamma-phospho-Glu-tRNA(Gln). The sequence is that of Glutamyl-tRNA(Gln) amidotransferase subunit A from Burkholderia ambifaria (strain MC40-6).